The primary structure comprises 337 residues: Inositol 2-dehydrogenase (337 aa).

Belongs to the Gfo/Idh/MocA family. In terms of assembly, homotetramer.

The enzyme catalyses myo-inositol + NAD(+) = scyllo-inosose + NADH + H(+). Functionally, involved in the oxidation of myo-inositol (MI) to 2-keto-myo-inositol (2KMI or 2-inosose). The protein is Inositol 2-dehydrogenase of Gluconacetobacter diazotrophicus (strain ATCC 49037 / DSM 5601 / CCUG 37298 / CIP 103539 / LMG 7603 / PAl5).